The sequence spans 378 residues: tRNA-specific 2-thiouridylase MnmA (378 aa).

Residues G9–S16 and M35 each bind ATP. The segment at N94–D96 is interaction with target base in tRNA. Residue C99 is the Nucleophile of the active site. Residues C99 and C195 are joined by a disulfide bond. Residue G123 coordinates ATP. The segment at K145 to Q147 is interaction with tRNA. The active-site Cysteine persulfide intermediate is the C195. The interaction with tRNA stretch occupies residues R307–Y308.

This sequence belongs to the MnmA/TRMU family.

The protein localises to the cytoplasm. It catalyses the reaction S-sulfanyl-L-cysteinyl-[protein] + uridine(34) in tRNA + AH2 + ATP = 2-thiouridine(34) in tRNA + L-cysteinyl-[protein] + A + AMP + diphosphate + H(+). Its function is as follows. Catalyzes the 2-thiolation of uridine at the wobble position (U34) of tRNA, leading to the formation of s(2)U34. The polypeptide is tRNA-specific 2-thiouridylase MnmA (Xanthomonas axonopodis pv. citri (strain 306)).